Consider the following 752-residue polypeptide: Myotubularin-related protein 10 (752 aa).

The Myotubularin phosphatase domain occupies 206–636; that stretch reads FDCSSDWDRE…SHLSVWKLYF (431 aa). Positions 652–683 form a coiled coil; sequence TAFHKLSVLTDEIEMLQNQLRQYKGAAGTANT.

It belongs to the protein-tyrosine phosphatase family. Non-receptor class myotubularin subfamily.

In Danio rerio (Zebrafish), this protein is Myotubularin-related protein 10 (mtmr10).